Consider the following 127-residue polypeptide: Calcitonin gene-related peptide 2 (127 aa).

The first 25 residues, 1 to 25, serve as a signal peptide directing secretion; it reads MGFRKFSPFLALSILVLYQAGSLQA. The propeptide occupies 26–79; that stretch reads APFRSALESSPDPATLSKEDARLLLAALVQDYVQMKASELKQEQETQGSSSAAQ. A disulfide bridge connects residues cysteine 83 and cysteine 88. Residue phenylalanine 118 is modified to Phenylalanine amide. A propeptide spanning residues 124–127 is cleaved from the precursor; it reads DLQA.

This sequence belongs to the calcitonin family. In terms of tissue distribution, expressed in spinal cord, pituitary and thalamus.

The protein localises to the secreted. In terms of biological role, CALCB/CGRP2 is a peptide hormone that induces vasodilation mediated by the CALCRL-RAMP1 receptor complex. Dilates a variety of vessels including the coronary, cerebral and systemic vasculature. Its abundance in the CNS also points toward a neurotransmitter or neuromodulator role. The sequence is that of Calcitonin gene-related peptide 2 from Homo sapiens (Human).